The chain runs to 261 residues: ATP synthase subunit a (261 aa).

Helical transmembrane passes span 45–65 (ITNVTMWMAIAVLVIAAILVL), 107–127 (VMTLFLFVLCGNVLGLLPLSF), 133–153 (MAVTVPLALMVFVGVTALGFM), 162–182 (MFWVTSAPLAIRPVLAVIEVI), 209–229 (IAGFASIVVVSPVVVGAVTAI), and 232–252 (LELLVAVVQAYVFTILTCVYL).

The protein belongs to the ATPase A chain family. As to quaternary structure, F-type ATPases have 2 components, CF(1) - the catalytic core - and CF(0) - the membrane proton channel. CF(1) has five subunits: alpha(3), beta(3), gamma(1), delta(1), epsilon(1). CF(0) has four main subunits: a, b, b' and c.

It localises to the cell inner membrane. Functionally, key component of the proton channel; it plays a direct role in the translocation of protons across the membrane. The chain is ATP synthase subunit a from Cereibacter sphaeroides (strain ATCC 17029 / ATH 2.4.9) (Rhodobacter sphaeroides).